The following is a 325-amino-acid chain: Tetraacyldisaccharide 4'-kinase (325 aa).

58-65 (TVGGSGKT) lines the ATP pocket.

Belongs to the LpxK family.

It carries out the reaction a lipid A disaccharide + ATP = a lipid IVA + ADP + H(+). Its pathway is glycolipid biosynthesis; lipid IV(A) biosynthesis; lipid IV(A) from (3R)-3-hydroxytetradecanoyl-[acyl-carrier-protein] and UDP-N-acetyl-alpha-D-glucosamine: step 6/6. Functionally, transfers the gamma-phosphate of ATP to the 4'-position of a tetraacyldisaccharide 1-phosphate intermediate (termed DS-1-P) to form tetraacyldisaccharide 1,4'-bis-phosphate (lipid IVA). This Coxiella burnetii (strain RSA 331 / Henzerling II) protein is Tetraacyldisaccharide 4'-kinase.